The primary structure comprises 288 residues: UAP56-interacting factor (288 aa).

Positions 11 to 29 (TIDKIDMSLDDIIKLNKQE) match the UAP56-binding motif motif. Residues 183-202 (DLPELSKTPPWRTSVSSGGS) form a disordered region.

This sequence belongs to the UIF family.

It localises to the nucleus. Its subcellular location is the nucleoplasm. The protein localises to the nucleus speckle. Required for mRNA export from the nucleus to the cytoplasm. Acts as an adapter that uses the ddx39b/uap56-nfx1 pathway to ensure efficient mRNA export and delivering to the nuclear pore. The polypeptide is UAP56-interacting factor (fyttd1) (Xenopus laevis (African clawed frog)).